A 186-amino-acid polypeptide reads, in one-letter code: Elongation factor P (186 aa).

The protein belongs to the elongation factor P family.

It is found in the cytoplasm. It participates in protein biosynthesis; polypeptide chain elongation. Its function is as follows. Involved in peptide bond synthesis. Stimulates efficient translation and peptide-bond synthesis on native or reconstituted 70S ribosomes in vitro. Probably functions indirectly by altering the affinity of the ribosome for aminoacyl-tRNA, thus increasing their reactivity as acceptors for peptidyl transferase. The protein is Elongation factor P of Shewanella halifaxensis (strain HAW-EB4).